A 364-amino-acid chain; its full sequence is MSILNLVRTDLLNSQNYVPGGESARYRSHANELPWSPVTMGEHNLNYYPNIGLQIELQNQLAKRYQIYSDQIILTRGSDDGIDLTTRFFLTAGKDAFMQFPPTFPMYAFYVRLQQAELIECPLDRRTNFRLTLDQIENSWKPNCKVIMFCSPNNPTGNLVDLNLIAKTCELYANQSIIVVDEAYIEFANAPSATSLIGEFENLIVLRTLSKAFGLAGLRLGCIIAQSPIIQAFNKIIAPYSIATPSMELAKRALNNSDWFTKTIEQIKSSRAWVIKKFADNPIIEKIYPTETNFILIQTRFSKQLTTWLARYGIAVRDFPSSSLLHDHLRITVGNDEQNQLLINALSSFNADVAGLNYEKDFIY.

Lysine 211 carries the N6-(pyridoxal phosphate)lysine modification.

Belongs to the class-II pyridoxal-phosphate-dependent aminotransferase family. Histidinol-phosphate aminotransferase subfamily. As to quaternary structure, homodimer. It depends on pyridoxal 5'-phosphate as a cofactor.

The catalysed reaction is L-histidinol phosphate + 2-oxoglutarate = 3-(imidazol-4-yl)-2-oxopropyl phosphate + L-glutamate. Its pathway is amino-acid biosynthesis; L-histidine biosynthesis; L-histidine from 5-phospho-alpha-D-ribose 1-diphosphate: step 7/9. The protein is Histidinol-phosphate aminotransferase 1 of Legionella pneumophila (strain Paris).